Consider the following 20-residue polypeptide: Short cationic peptide-4b (20 aa).

Position 20 is a glutamic acid 1-amide (Glu-20).

In terms of tissue distribution, expressed by the venom gland.

It is found in the secreted. In Cupiennius salei (American wandering spider), this protein is Short cationic peptide-4b.